We begin with the raw amino-acid sequence, 1131 residues long: Phytochrome (1131 aa).

The tract at residues 1–30 (MASNSRHTQSQSTGSNNRRSSTNTNTTTNK) is disordered. A compositionally biased stretch (low complexity) spans 9-29 (QSQSTGSNNRRSSTNTNTTTN). One can recognise a GAF domain in the interval 227–406 (DVGLLCDTVV…ALGLQLNMEL (180 aa)). Cys332 lines the phytochromobilin pocket. PAS domains follow at residues 621–692 (VASE…LRGE) and 755–826 (DYRS…TIVL). The Histidine kinase domain occupies 903-1123 (YIRQEIKNPL…LVNVEFPMAQ (221 aa)).

Belongs to the phytochrome family. As to quaternary structure, homodimer. Post-translationally, contains one covalently linked phytochromobilin chromophore.

Functionally, regulatory photoreceptor which exists in two forms that are reversibly interconvertible by light: the Pr form that absorbs maximally in the red region of the spectrum and the Pfr form that absorbs maximally in the far-red region. Photoconversion of Pr to Pfr induces an array of morphogenic responses, whereas reconversion of Pfr to Pr cancels the induction of those responses. Pfr controls the expression of a number of nuclear genes including those encoding the small subunit of ribulose-bisphosphate carboxylase, chlorophyll A/B binding protein, protochlorophyllide reductase, rRNA, etc. It also controls the expression of its own gene(s) in a negative feedback fashion. This Pinus sylvestris (Scotch pine) protein is Phytochrome.